A 152-amino-acid chain; its full sequence is Transcriptional repressor NrdR (152 aa).

A zinc finger lies at 3–34 (CPFCNHGELKVIDSRNAPEANAIKRRRECLNC). Residues 48–138 (LQVLKRDGRY…VYRRFKDVGE (91 aa)) enclose the ATP-cone domain.

Belongs to the NrdR family. Requires Zn(2+) as cofactor.

Its function is as follows. Negatively regulates transcription of bacterial ribonucleotide reductase nrd genes and operons by binding to NrdR-boxes. This is Transcriptional repressor NrdR from Chlamydia abortus (strain DSM 27085 / S26/3) (Chlamydophila abortus).